Reading from the N-terminus, the 197-residue chain is 3-isopropylmalate dehydratase small subunit (197 aa).

Belongs to the LeuD family. LeuD type 1 subfamily. As to quaternary structure, heterodimer of LeuC and LeuD.

It catalyses the reaction (2R,3S)-3-isopropylmalate = (2S)-2-isopropylmalate. It participates in amino-acid biosynthesis; L-leucine biosynthesis; L-leucine from 3-methyl-2-oxobutanoate: step 2/4. Its function is as follows. Catalyzes the isomerization between 2-isopropylmalate and 3-isopropylmalate, via the formation of 2-isopropylmaleate. The sequence is that of 3-isopropylmalate dehydratase small subunit from Streptomyces griseus subsp. griseus (strain JCM 4626 / CBS 651.72 / NBRC 13350 / KCC S-0626 / ISP 5235).